The sequence spans 153 residues: uncharacterized protein (153 aa).

Residues M1–A19 form the signal peptide. Residues R46, E54, and R88 contribute to the active site.

This sequence belongs to the thermonuclease family.

This is an uncharacterized protein from Escherichia coli O157:H7.